The sequence spans 205 residues: Proteasome subunit beta type-3 (205 aa).

This sequence belongs to the peptidase T1B family. As to quaternary structure, the 26S proteasome consists of a 20S proteasome core and two 19S regulatory subunits. The 20S proteasome core is composed of 28 subunits that are arranged in four stacked rings, resulting in a barrel-shaped structure. The two end rings are each formed by seven alpha subunits, and the two central rings are each formed by seven beta subunits. The catalytic chamber with the active sites is on the inside of the barrel.

Its subcellular location is the cytoplasm. The protein resides in the nucleus. Non-catalytic component of the proteasome, a multicatalytic proteinase complex which is characterized by its ability to cleave peptides with Arg, Phe, Tyr, Leu, and Glu adjacent to the leaving group at neutral or slightly basic pH. The proteasome has an ATP-dependent proteolytic activity. In Oncorhynchus mykiss (Rainbow trout), this protein is Proteasome subunit beta type-3 (psmb3).